We begin with the raw amino-acid sequence, 547 residues long: CTP synthase (547 aa).

The interval 1–265 is amidoligase domain; the sequence is MARYIFITGG…DQAVLDAFQI (265 aa). A CTP-binding site is contributed by Ser-13. A UTP-binding site is contributed by Ser-13. Residues 14–19 and Asp-71 contribute to the ATP site; that span reads SLGKGL. The Mg(2+) site is built by Asp-71 and Glu-139. CTP contacts are provided by residues 146–148, 186–191, and Lys-222; these read DIE and KTKPTQ. UTP-binding positions include 186 to 191 and Lys-222; that span reads KTKPTQ. The region spanning 291-546 is the Glutamine amidotransferase type-1 domain; that stretch reads RIAVVGKYTQ…IRAAMDNERL (256 aa). Gly-352 serves as a coordination point for L-glutamine. The Nucleophile; for glutamine hydrolysis role is filled by Cys-379. L-glutamine is bound by residues 380-383, Glu-403, and Arg-474; that span reads LGMQ. Catalysis depends on residues His-519 and Glu-521.

This sequence belongs to the CTP synthase family. As to quaternary structure, homotetramer.

The catalysed reaction is UTP + L-glutamine + ATP + H2O = CTP + L-glutamate + ADP + phosphate + 2 H(+). The enzyme catalyses L-glutamine + H2O = L-glutamate + NH4(+). It carries out the reaction UTP + NH4(+) + ATP = CTP + ADP + phosphate + 2 H(+). It participates in pyrimidine metabolism; CTP biosynthesis via de novo pathway; CTP from UDP: step 2/2. Allosterically activated by GTP, when glutamine is the substrate; GTP has no effect on the reaction when ammonia is the substrate. The allosteric effector GTP functions by stabilizing the protein conformation that binds the tetrahedral intermediate(s) formed during glutamine hydrolysis. Inhibited by the product CTP, via allosteric rather than competitive inhibition. In terms of biological role, catalyzes the ATP-dependent amination of UTP to CTP with either L-glutamine or ammonia as the source of nitrogen. Regulates intracellular CTP levels through interactions with the four ribonucleotide triphosphates. The polypeptide is CTP synthase (Paracoccus denitrificans (strain Pd 1222)).